The following is a 417-amino-acid chain: Serine--tRNA ligase (417 aa).

226 to 228 (TSE) is an L-serine binding site. ATP is bound by residues 257–259 (RRE) and Val-273. Glu-280 is an L-serine binding site. 344 to 347 (ELTS) lines the ATP pocket. Thr-379 provides a ligand contact to L-serine.

The protein belongs to the class-II aminoacyl-tRNA synthetase family. Type-1 seryl-tRNA synthetase subfamily. In terms of assembly, homodimer. The tRNA molecule binds across the dimer.

It localises to the cytoplasm. It carries out the reaction tRNA(Ser) + L-serine + ATP = L-seryl-tRNA(Ser) + AMP + diphosphate + H(+). The enzyme catalyses tRNA(Sec) + L-serine + ATP = L-seryl-tRNA(Sec) + AMP + diphosphate + H(+). It functions in the pathway aminoacyl-tRNA biosynthesis; selenocysteinyl-tRNA(Sec) biosynthesis; L-seryl-tRNA(Sec) from L-serine and tRNA(Sec): step 1/1. Its function is as follows. Catalyzes the attachment of serine to tRNA(Ser). Is also able to aminoacylate tRNA(Sec) with serine, to form the misacylated tRNA L-seryl-tRNA(Sec), which will be further converted into selenocysteinyl-tRNA(Sec). In Mycolicibacterium smegmatis (strain ATCC 700084 / mc(2)155) (Mycobacterium smegmatis), this protein is Serine--tRNA ligase.